The chain runs to 242 residues: Probable transcriptional regulatory protein XAC3151 (242 aa).

It belongs to the TACO1 family.

It localises to the cytoplasm. The protein is Probable transcriptional regulatory protein XAC3151 of Xanthomonas axonopodis pv. citri (strain 306).